Reading from the N-terminus, the 193-residue chain is Rho-related GTP-binding protein RhoA-B (193 aa).

GTP contacts are provided by residues 12 to 19, 30 to 37, 59 to 63, 117 to 120, and 160 to 162; these read GDGACGKT, FPEVYVPT, DTAGQ, NKKD, and SAK. Tyr-34 carries (Microbial infection) O-linked (GlcNAc) tyrosine; by Yersinia Afp18 glycosylation. The residue at position 190 (Cys-190) is a Cysteine methyl ester. Residue Cys-190 is the site of S-geranylgeranyl cysteine attachment. The propeptide at 191 to 193 is removed in mature form; it reads CLL.

This sequence belongs to the small GTPase superfamily. Rho family. Post-translationally, (Microbial infection) Glycosylated at Tyr-34 by Yersinia ruckeri toxin Afp18. Mono-O-GlcNAcylation by Afp18 inhibits RhoA activation by guanine nucleotide exchange factors and blocks RhoA signaling.

The protein resides in the cell membrane. Regulates a signal transduction pathway linking plasma membrane receptors to the assembly of focal adhesions and actin stress fibers. In Danio rerio (Zebrafish), this protein is Rho-related GTP-binding protein RhoA-B.